The primary structure comprises 718 residues: F-box/LRR-repeat protein 18 (718 aa).

One can recognise an F-box domain in the interval 25-72; the sequence is GVHLLGFSDEILLHILSHVPSTDLILNVRRTCRKLAALCLDKSLIHTV. LRR repeat units follow at residues 77-103, 104-128, 129-153, 177-201, 324-352, 367-392, 393-422, 468-492, 516-540, 542-567, 572-597, and 599-623; these read DYQASEDKVRQLVKEIGREIQQLSMAG, CYWLPGSTVEHVARCRSLVKVNLSG, CHLTSLRLSKMLSALQHLRSLAIDV, KQTLFTPSYGVVPCCTSLEKLLLYF, CTLSGGHLIQQVINGGKDLRSLASLNLSG, EDDIDSSILETLVASCCNLRHLNLSA, AHHHSSEGLGRHLCQLLARLRHLRSLSLPV, CPQPSSVFWSLLKNLPFLEHLELIG, AQSVGDSEVAAIGQLAFLRHLTLAQ, PSVLTGSGLVNIGLQCQQLRSLSLAN, GKVVYMPALSDMLKHCKRLRDLRLEQ, and YFSANAQFFQALSQCPSLQRLCLVS.

In terms of assembly, directly interacts with SKP1 and CUL1.

Substrate-recognition component of the SCF (SKP1-CUL1-F-box protein)-type E3 ubiquitin ligase complex. The chain is F-box/LRR-repeat protein 18 (FBXL18) from Homo sapiens (Human).